Here is a 1103-residue protein sequence, read N- to C-terminus: Bifunctional cytochrome P450/NADPH--P450 reductase (1103 aa).

The interval 1–491 is cytochrome P450; sequence MSTPKAEPVP…SSSEHADHAA (491 aa). Cys415 serves as a coordination point for heme. An NADPH--P450 reductase region spans residues 492-1103; sequence GHGKAGAAKK…KERYTTDIFA (612 aa). Residues 508–649 form the Flavodoxin-like domain; it reads MHVYYGSNTG…DFDTWGETSF (142 aa). Residues 514 to 519, 561 to 564, Cys596, and Thr604 contribute to the FMN site; these read SNTGTC and SYEG. Residues 685-924 enclose the FAD-binding FR-type domain; sequence LQLQEGLVVE…RPSHTGFKPP (240 aa).

This sequence in the N-terminal section; belongs to the cytochrome P450 family. It depends on heme as a cofactor. Requires FAD as cofactor. FMN serves as cofactor.

It carries out the reaction 2 oxidized [cytochrome P450] + NADPH = 2 reduced [cytochrome P450] + NADP(+) + H(+). The catalysed reaction is an organic molecule + reduced [NADPH--hemoprotein reductase] + O2 = an alcohol + oxidized [NADPH--hemoprotein reductase] + H2O + H(+). In terms of biological role, functions as a fatty acid monooxygenase. Also displays a NADPH-dependent reductase activity in the C-terminal domain, which allows electron transfer from NADPH to the heme iron of the cytochrome P450 N-terminal domain. The protein is Bifunctional cytochrome P450/NADPH--P450 reductase of Aspergillus oryzae (strain ATCC 42149 / RIB 40) (Yellow koji mold).